The primary structure comprises 92 residues: Non-specific lipid-transfer protein 1 (92 aa).

4 disulfide bridges follow: Cys-4-Cys-52, Cys-14-Cys-28, Cys-29-Cys-74, and Cys-50-Cys-88.

This sequence belongs to the plant LTP family. Expressed in seeds and, at very low levels, in pulp of fruit (at protein level).

In terms of biological role, plant non-specific lipid-transfer proteins transfer phospholipids as well as galactolipids across membranes. May play a role in wax or cutin deposition in the cell walls of expanding epidermal cells and certain secretory tissues. The polypeptide is Non-specific lipid-transfer protein 1 (Actinidia deliciosa (Kiwi)).